Here is a 210-residue protein sequence, read N- to C-terminus: High mobility group protein B2 (210 aa).

N6-acetyllysine is present on K3. The segment at residues 9 to 79 (PRGKMSSYAF…RYDREMKNYV (71 aa)) is a DNA-binding region (HMG box 1). C23 is modified (cysteine sulfonic acid (-SO3H); alternate). An intrachain disulfide couples C23 to C45. K30 carries the N6-acetyllysine modification. S35 is subject to Phosphoserine. K43 carries the N6-acetyllysine modification. The residue at position 45 (C45) is a Cysteine sulfonic acid (-SO3H); alternate. Basic and acidic residues predominate over residues 51–76 (TMSAKEKSKFEDLAKSDKARYDREMK). The disordered stretch occupies residues 51–102 (TMSAKEKSKFEDLAKSDKARYDREMKNYVPPKGDKKGKKKDPNAPKRPPSAF). At K90 the chain carries N6-acetyllysine. The segment at residues 95 to 163 (PKRPPSAFFL…KYEKDIAAYR (69 aa)) is a DNA-binding region (HMG box 2). Residue S100 is modified to Phosphoserine. The residue at position 106 (C106) is a Cysteine sulfonic acid (-SO3H). N6-acetyllysine is present on residues K114 and K141. Residues 162–172 (YRAKGKSEVGK) show a composition bias toward basic and acidic residues. Residues 162–210 (YRAKGKSEVGKKGPGRPTGSKKKNEPEDEEEEEEEEDDEDEEEEDEDEE) are disordered. Positions 165–180 (KGKSEVGKKGPGRPTG) are required for chemotactic activity. Over residues 187-210 (PEDEEEEEEEEDDEDEEEEDEDEE) the composition is skewed to acidic residues.

This sequence belongs to the HMGB family. In terms of assembly, interacts with POU2F2, POU2F1 and POU3F1. Component of the RAG complex composed of core components RAG1 and RAG2, and associated component HMGB1 or HMGB2. Component of the SET complex, composed of at least ANP32A, APEX1, HMGB2, NME1, SET and TREX1. Directly interacts with SET. Interacts with LEF1. In terms of processing, reduction/oxidation of cysteine residues Cys-23, Cys-45 and Cys-106 and a possible intramolecular disulfide bond involving Cys-23 and Cys-45 give rise to different redox forms with specific functional activities in various cellular compartments: 1- fully reduced HMGB2 (HMGB2C23hC45hC106h), 2- disulfide HMGB2 (HMGB2C23-C45C106h) and 3- sulfonyl HMGB2 (HMGB2C23soC45soC106so).

It is found in the nucleus. Its subcellular location is the chromosome. It localises to the cytoplasm. The protein resides in the secreted. Functionally, multifunctional protein with various roles in different cellular compartments. May act in a redox sensitive manner. In the nucleus is an abundant chromatin-associated non-histone protein involved in transcription, chromatin remodeling and V(D)J recombination and probably other processes. Binds DNA with a preference to non-canonical DNA structures such as single-stranded DNA. Can bent DNA and enhance DNA flexibility by looping thus providing a mechanism to promote activities on various gene promoters by enhancing transcription factor binding and/or bringing distant regulatory sequences into close proximity. Involved in V(D)J recombination by acting as a cofactor of the RAG complex: acts by stimulating cleavage and RAG protein binding at the 23 bp spacer of conserved recombination signal sequences (RSS). Proposed to be involved in the innate immune response to nucleic acids by acting as a cytoplasmic promiscuous immunogenic DNA/RNA sensor which cooperates with subsequent discriminative sensing by specific pattern recognition receptors. In the extracellular compartment acts as a chemokine. Promotes proliferation and migration of endothelial cells implicating AGER/RAGE. Has antimicrobial activity in gastrointestinal epithelial tissues. Involved in inflammatory response to antigenic stimulus coupled with pro-inflammatory activity. May play a role in germ cell differentiation. Involved in modulation of neurogenesis probably by regulation of neural stem proliferation. Involved in articular cartilage surface maintenance implicating LEF1 and the Wnt/beta-catenin pathway. The polypeptide is High mobility group protein B2 (Hmgb2) (Rattus norvegicus (Rat)).